The primary structure comprises 263 residues: 3-methyl-2-oxobutanoate hydroxymethyltransferase (263 aa).

Positions 45 and 84 each coordinate Mg(2+). Residues 45–46 (DS), aspartate 84, and lysine 112 each bind 3-methyl-2-oxobutanoate. Residue glutamate 114 participates in Mg(2+) binding. Residue glutamate 181 is the Proton acceptor of the active site.

The protein belongs to the PanB family. Homodecamer; pentamer of dimers. It depends on Mg(2+) as a cofactor.

It is found in the cytoplasm. The enzyme catalyses 3-methyl-2-oxobutanoate + (6R)-5,10-methylene-5,6,7,8-tetrahydrofolate + H2O = 2-dehydropantoate + (6S)-5,6,7,8-tetrahydrofolate. The protein operates within cofactor biosynthesis; (R)-pantothenate biosynthesis; (R)-pantoate from 3-methyl-2-oxobutanoate: step 1/2. Its function is as follows. Catalyzes the reversible reaction in which hydroxymethyl group from 5,10-methylenetetrahydrofolate is transferred onto alpha-ketoisovalerate to form ketopantoate. In Chromohalobacter salexigens (strain ATCC BAA-138 / DSM 3043 / CIP 106854 / NCIMB 13768 / 1H11), this protein is 3-methyl-2-oxobutanoate hydroxymethyltransferase.